A 459-amino-acid polypeptide reads, in one-letter code: Ammonium transporter Rh type B (459 aa).

Residues 1–10 are Cytoplasmic-facing; the sequence is MAESTNLRLR. A helical membrane pass occupies residues 11–31; sequence LPLICIILEVILIILFGVLVE. Residues 32–58 lie on the Extracellular side of the membrane; that stretch reads YNDDTDAKKWNKNNSTDPATNEFYYRY. N-linked (GlcNAc...) asparagine glycosylation is present at N45. A helical membrane pass occupies residues 59–79; it reads PSFQDVHVMIFVGFGFLMTFL. Topologically, residues 80 to 87 are cytoplasmic; it reads QRYGFSSM. A helical transmembrane segment spans residues 88 to 108; sequence GFNFLIAAFSLQWATLMQGFF. The Extracellular portion of the chain corresponds to 109–121; the sequence is HGMHHGKIHVGVT. A helical transmembrane segment spans residues 122–142; that stretch reads SMINADFCTGAVLISFGAVLG. The Cytoplasmic portion of the chain corresponds to 143–149; it reads KTSPVQL. The chain crosses the membrane as a helical span at residues 150 to 170; the sequence is LVMAILEVTLFAVNEYILLSI. At 171 to 176 the chain is on the extracellular side; that stretch reads LGANDA. The chain crosses the membrane as a helical span at residues 177–197; it reads GGSMTIHTFGAYFGLMVTRIL. Residues 198 to 216 are Cytoplasmic-facing; it reads HRPNLDKSKHKNSSVYHSD. The chain crosses the membrane as a helical span at residues 217 to 237; that stretch reads LFAMIGTIFLWMFWPSFNSAI. Residues 238–248 lie on the Extracellular side of the membrane; the sequence is TQYGDPQHRTA. A helical membrane pass occupies residues 249–269; the sequence is ANTYYSLAACTLATFGFSSLV. The Cytoplasmic segment spans residues 270 to 274; it reads NPEGK. Residues 275 to 295 traverse the membrane as a helical segment; the sequence is LDMVHIQNAALAGGVAVGTAG. A topological domain (extracellular) is located at residue E296. A helical membrane pass occupies residues 297-317; it reads MMLTPFGSMIVGFLAGTISVL. At 318–340 the chain is on the cytoplasmic side; sequence GYKYLTPFMESKLKIQDTCGIHN. A helical transmembrane segment spans residues 341–361; it reads LHGMPGILGAIVGAVTAALAS. Residues 362–392 are Extracellular-facing; the sequence is RDVYGNGLDKVFLEAADNSQWSAQTKGGFQA. Residues 393 to 413 traverse the membrane as a helical segment; it reads ISLAVTLGIALIGGLITGFLL. Residues 414-459 lie on the Cytoplasmic side of the membrane; it reads KLPIYGTPPDTQCFEDAVYWEVPGEEEDHHELNEVSTQNEVEKLNS. The segment at 440–459 is disordered; the sequence is EDHHELNEVSTQNEVEKLNS.

This sequence belongs to the ammonium transporter (TC 2.A.49) family. Rh subfamily.

It localises to the basolateral cell membrane. It is found in the cytoplasmic vesicle membrane. In terms of biological role, functions as an ammonia transporter. May play a role in the elimination of ammonia in the gill. The protein is Ammonium transporter Rh type B (rhbg) of Danio rerio (Zebrafish).